We begin with the raw amino-acid sequence, 1170 residues long: Integrin alpha-2 (1170 aa).

Positions 1-18 (PLQLVLVFSQGILNCCVA) are cleaved as a signal peptide. Topologically, residues 19-1121 (YNVGLPKAKI…KPHEKVEVPT (1103 aa)) are extracellular. 2 FG-GAP repeats span residues 23–81 (LPKA…TTTC) and 90–150 (TSMS…LRTS). Residues Cys-72 and Cys-81 are joined by a disulfide bond. Residues Asn-94, Asn-101, and Asn-332 are each glycosylated (N-linked (GlcNAc...) asparagine). One can recognise a VWFA domain in the interval 177–354 (WDAVKNFLEK…TIGEQIFSIE (178 aa)). FG-GAP repeat units lie at residues 355–409 (GTVQ…LIFS), 412–464 (AFEQ…ENGN), 466–528 (TVIQ…ILNW), 529–587 (HQFL…MIRL), and 591–653 (QKIL…FTPK). Residues Asn-421, Asn-449, and Asn-464 are each glycosylated (N-linked (GlcNAc...) asparagine). Residues 472–474 (RGD) carry the Cell attachment site motif. Residues Asp-488, Asn-490, Asp-492, Asp-496, Asp-552, Asn-554, Asp-556, Asp-560, Asp-616, Asn-618, Asp-620, and Asp-624 each contribute to the Ca(2+) site. Cysteines 669 and 726 form a disulfide. N-linked (GlcNAc...) asparagine glycans are attached at residues Asn-688 and Asn-748. 2 cysteine pairs are disulfide-bonded: Cys-778–Cys-784 and Cys-854–Cys-865. The N-linked (GlcNAc...) asparagine glycan is linked to Asn-945. 2 disulfide bridges follow: Cys-1008–Cys-1039 and Cys-1044–Cys-1049. Asn-1063 and Asn-1070 each carry an N-linked (GlcNAc...) asparagine glycan. A helical transmembrane segment spans residues 1122 to 1143 (GVIVGSVIAGILLLLALVAILW). Residues 1144–1170 (KLGFFKRKYEKMAKNPDETDETTELNS) are Cytoplasmic-facing. Residues 1146–1150 (GFFKR) carry the GFFKR motif motif.

The protein belongs to the integrin alpha chain family. Heterodimer of an alpha and a beta subunit. Alpha-2 associates with beta-1. Interacts with HPS5 and RAB21.

The protein localises to the membrane. Its function is as follows. Integrin alpha-2/beta-1 is a receptor for laminin, collagen, collagen C-propeptides, fibronectin and E-cadherin. It recognizes the proline-hydroxylated sequence G-F-P-G-E-R in collagen. It is responsible for adhesion of platelets and other cells to collagens, modulation of collagen and collagenase gene expression, force generation and organization of newly synthesized extracellular matrix. This chain is Integrin alpha-2 (ITGA2), found in Bos taurus (Bovine).